A 720-amino-acid chain; its full sequence is Fatty acid CoA ligase Acsl3 (720 aa).

Residues 21–41 (ILLYFIHFIISLYTILTYIPF) traverse the membrane as a helical; Signal-anchor for type III membrane protein segment. The Cytoplasmic portion of the chain corresponds to 42–720 (YFLCESKQEK…ADIERMYGRK (679 aa)). At serine 683 the chain carries Phosphoserine.

This sequence belongs to the ATP-dependent AMP-binding enzyme family. Mg(2+) is required as a cofactor. In terms of tissue distribution, predominantly expressed in the brain, and to a much lesser extent, in lung, adrenal gland, kidney, small intestine, and adipose tissue but not detected in heart or liver.

Its subcellular location is the mitochondrion outer membrane. The protein resides in the peroxisome membrane. It is found in the microsome membrane. The protein localises to the endoplasmic reticulum membrane. The enzyme catalyses a long-chain fatty acid + ATP + CoA = a long-chain fatty acyl-CoA + AMP + diphosphate. The catalysed reaction is (5Z,8Z,11Z,14Z)-eicosatetraenoate + ATP + CoA = (5Z,8Z,11Z,14Z)-eicosatetraenoyl-CoA + AMP + diphosphate. It catalyses the reaction a medium-chain fatty acid + ATP + CoA = a medium-chain fatty acyl-CoA + AMP + diphosphate. It carries out the reaction 15-hydroxy-(5Z,8Z,11Z,13E)-eicosatetraenoate + ATP + CoA = 15-hydroxy-(5Z,8Z,11Z,13E)-eicosatetraenoyl-CoA + AMP + diphosphate. The enzyme catalyses 12-hydroxy-(5Z,8Z,10E,14Z)-eicosatetraenoate + ATP + CoA = 12-hydroxy-(5Z,8Z,10E,14Z)-eicosatetraenoyl-CoA + AMP + diphosphate. The catalysed reaction is 5-hydroxy-(6E,8Z,11Z,14Z)-eicosatetraenoate + ATP + CoA = 5-hydroxy-(6E,8Z,11Z,14Z)-eicosatetraenoyl-CoA + AMP + diphosphate. It catalyses the reaction 14,15-epoxy-(5Z,8Z,11Z)-eicosatrienoate + ATP + CoA = 14,15-epoxy-(5Z,8Z,11Z)-eicosatrienoyl-CoA + AMP + diphosphate. It carries out the reaction 11,12-epoxy-(5Z,8Z,14Z)-eicosatrienoate + ATP + CoA = 11,12-epoxy-(5Z,8Z,14Z)-eicosatrienoyl-CoA + AMP + diphosphate. The enzyme catalyses (E)-hexadec-2-enoate + ATP + CoA = (2E)-hexadecenoyl-CoA + AMP + diphosphate. The catalysed reaction is hexadecanoate + ATP + CoA = hexadecanoyl-CoA + AMP + diphosphate. It catalyses the reaction tetradecanoate + ATP + CoA = tetradecanoyl-CoA + AMP + diphosphate. It carries out the reaction dodecanoate + ATP + CoA = dodecanoyl-CoA + AMP + diphosphate. The enzyme catalyses octadecanoate + ATP + CoA = octadecanoyl-CoA + AMP + diphosphate. The catalysed reaction is eicosanoate + ATP + CoA = eicosanoyl-CoA + AMP + diphosphate. It catalyses the reaction (9Z)-octadecenoate + ATP + CoA = (9Z)-octadecenoyl-CoA + AMP + diphosphate. It carries out the reaction (9Z)-hexadecenoate + ATP + CoA = (9Z)-hexadecenoyl-CoA + AMP + diphosphate. The enzyme catalyses (9Z,12Z)-octadecadienoate + ATP + CoA = (9Z,12Z)-octadecadienoyl-CoA + AMP + diphosphate. The catalysed reaction is (9Z,12Z,15Z)-octadecatrienoate + ATP + CoA = (9Z,12Z,15Z)-octadecatrienoyl-CoA + AMP + diphosphate. It catalyses the reaction (4Z,7Z,10Z,13Z,16Z,19Z)-docosahexaenoate + ATP + CoA = (4Z,7Z,10Z,13Z,16Z,19Z)-docosahexaenoyl-CoA + AMP + diphosphate. It carries out the reaction (5Z,8Z,11Z,14Z,17Z)-eicosapentaenoate + ATP + CoA = (5Z,8Z,11Z,14Z,17Z)-eicosapentaenoyl-CoA + AMP + diphosphate. The enzyme catalyses a fatty acid + ATP + CoA = a fatty acyl-CoA + AMP + diphosphate. In terms of biological role, catalyzes the conversion of long-chain fatty acids to their active form acyl-CoA for both synthesis of cellular lipids, and degradation via beta-oxidation. ACSL3 is required for the incorporation of fatty acids into phosphatidylcholine, the major phospholipid located on the surface of VLDL (very low density lipoproteins). Has mainly an anabolic role in energy metabolism. Mediates hepatic lipogenesis. Preferentially uses myristate, laurate, arachidonate and eicosapentaenoate as substrates. Both isoforms exhibit the same level of activity. The polypeptide is Fatty acid CoA ligase Acsl3 (Rattus norvegicus (Rat)).